Here is a 439-residue protein sequence, read N- to C-terminus: MTIYKDARNGRITEEMKKIAEVEGVDPEFVRRGLAAGRIVLLRNLKRADRVKTVAVGEGMLTKVNANIGTSNTLIDVNMEVEKAKIAKKYGADTVMDLSTGGNLDVIRRKIMEAAEPLPLGTVPIYQAFMDVATRKGAGLYMTEDDILNTIEKHLKDGVDFMTLHAALTRDLAAKAVKSDRAEPIVSRGGSILAAWMLEHGKENPLLSNFDYILEMFKEYDAVISLGDSLRPGALEDAHDEYHLSELMVNARLVKRAREAGVQVMLEGPGHVPLDRVVADVKLAKRLTEGAPYYILGPLVTDIAAGYDHIAGAIGGAIAAAHGADFLCYVTPAEHLNLPNPEQVREGVIAFRIAAHAADIVKYPDRAMKVDIEMGRCRGRLDWECMIRLSLDPDKAREIRNQYGPTSIKSCNMCGSLCVFLLLDKWRRKKDEELHAPLA.

Residues Asn-67, Met-96, Tyr-126, His-165, 187-189 (SRG), 228-231 (DSLR), and Glu-267 each bind substrate. Zn(2+) is bound at residue His-271. Tyr-294 is a binding site for substrate. His-335 is a Zn(2+) binding site. The [4Fe-4S] cluster site is built by Cys-411, Cys-414, and Cys-418.

This sequence belongs to the ThiC family. [4Fe-4S] cluster is required as a cofactor.

The enzyme catalyses 5-amino-1-(5-phospho-beta-D-ribosyl)imidazole + S-adenosyl-L-methionine = 4-amino-2-methyl-5-(phosphooxymethyl)pyrimidine + CO + 5'-deoxyadenosine + formate + L-methionine + 3 H(+). It functions in the pathway cofactor biosynthesis; thiamine diphosphate biosynthesis. Its function is as follows. Catalyzes the synthesis of the hydroxymethylpyrimidine phosphate (HMP-P) moiety of thiamine from aminoimidazole ribotide (AIR) in a radical S-adenosyl-L-methionine (SAM)-dependent reaction. This chain is Phosphomethylpyrimidine synthase, found in Ignicoccus hospitalis (strain KIN4/I / DSM 18386 / JCM 14125).